The following is a 505-amino-acid chain: MVSIRPDEISQIIRDQIEQYEQDVKVSNVGTVLQVGDGIARVYGLDKVMAGELVEFADGTVGIAQNLEEDNVGAVLMGEGREIQEGSAVTATGRIAQVPVGDALVGRVVDGLGRPIDGKGEMKTTDSRLLESPAPGIIDRRSVYEPMQTGITAIDSMIPIGRGQRELIIGDRQTGKTAIAIDTIINQKGEDVICVYVAIGQKASTVAQVVGTLEEKGALDYTVIVAANASDPATLQYLAPYTGATIAEYFMYKGKATLVIYDDLSKQAQAYRQVSLLLRRPPGREAYPGDVFYLHSRLLERAAKLNDKLGGGSMTALPIIETQAGDVSAYIPTNVISITDGQIFLSSDLFNAGFRPAVNAGISVSRVGSAAQTKAIKKVAGKIKLELAQFAELEAFSQFASDLDKATQNQLARGQRLREILKQPQNSPRSLPEQVAAIYSGINGYLDDIPLEKAAKFIAGLLDYLNNSKPKFGEIIKTEKVLTDEAQTLLKEGITEYKQTFLVSA.

170–177 (GDRQTGKT) lines the ATP pocket.

The protein belongs to the ATPase alpha/beta chains family. F-type ATPases have 2 components, CF(1) - the catalytic core - and CF(0) - the membrane proton channel. CF(1) has five subunits: alpha(3), beta(3), gamma(1), delta(1), epsilon(1). CF(0) has four main subunits: a(1), b(1), b'(1) and c(9-12).

It localises to the cellular thylakoid membrane. It carries out the reaction ATP + H2O + 4 H(+)(in) = ADP + phosphate + 5 H(+)(out). In terms of biological role, produces ATP from ADP in the presence of a proton gradient across the membrane. The alpha chain is a regulatory subunit. The chain is ATP synthase subunit alpha from Trichodesmium erythraeum (strain IMS101).